Consider the following 470-residue polypeptide: Sorting nexin-17 (470 aa).

One can recognise a PX domain in the interval 1 to 109; the sequence is MHFSIPETES…SFLRRAQQET (109 aa). A 1,2-diacyl-sn-glycero-3-phospho-(1D-myo-inositol-3-phosphate)-binding residues include Arg36, Ser38, Lys62, and Arg75. The Ras-associating domain occupies 115–206; sequence EEVSLEVLLS…YKIVLRKSYW (92 aa). The interval 115–432 is FERM-like; the sequence is EEVSLEVLLS…DASRESMVKL (318 aa). The interval 270–432 is PTB-like F3 module; that stretch reads GYLRFDACVA…DASRESMVKL (163 aa). Positions 401–425 are disordered; sequence GGNLRRSDSQQAVKSPPLLESPDAS. A phosphoserine mark is found at Ser407, Ser409, Ser415, Ser421, Ser437, and Ser440.

The protein belongs to the sorting nexin family. Monomer. Interacts with APP (via cytoplasmic YXNPXY motif). Interacts with KIF1B. Interacts with the C-termini of P-selectin, PTC, LDLR, VLDLR, LRP1 and LRP8. Interacts with KRIT1 (via N-terminus). Interacts with HRAS. Interacts with ITGB1 and ITGB5 (via NPxY motif). Interacts with CCDC22 and CCDC93; the interaction associates SNX17 with the CCC complex. Interacts (via C-terminus) with VPS26C and VPS35L; the interactions are direct and associate SNX17 with the retriever complex.

The protein localises to the cytoplasm. It localises to the early endosome. Its subcellular location is the cytoplasmic vesicle membrane. Functionally, critical regulator of endosomal recycling of numerous surface proteins, including integrins, signaling receptor and channels. Binds to NPxY sequences in the cytoplasmic tails of target cargos. Associates with retriever and CCC complexes to prevent lysosomal degradation and promote cell surface recycling of numerous cargos such as integrins ITGB1, ITGB5 and their associated alpha subunits. Also required for maintenance of normal cell surface levels of APP and LRP1. Interacts with membranes containing phosphatidylinositol 3-phosphate (PtdIns(3P)). The chain is Sorting nexin-17 (Snx17) from Rattus norvegicus (Rat).